A 172-amino-acid chain; its full sequence is Ribosome maturation factor RimM (172 aa).

One can recognise a PRC barrel domain in the interval aspartate 96 to leucine 168.

Belongs to the RimM family. In terms of assembly, binds ribosomal protein uS19.

It is found in the cytoplasm. An accessory protein needed during the final step in the assembly of 30S ribosomal subunit, possibly for assembly of the head region. Essential for efficient processing of 16S rRNA. May be needed both before and after RbfA during the maturation of 16S rRNA. It has affinity for free ribosomal 30S subunits but not for 70S ribosomes. This Streptococcus agalactiae serotype Ia (strain ATCC 27591 / A909 / CDC SS700) protein is Ribosome maturation factor RimM.